The chain runs to 211 residues: Protein-L-isoaspartate O-methyltransferase 2 (211 aa).

The active site involves Ser-60.

It belongs to the methyltransferase superfamily. L-isoaspartyl/D-aspartyl protein methyltransferase family.

The protein resides in the cytoplasm. The catalysed reaction is [protein]-L-isoaspartate + S-adenosyl-L-methionine = [protein]-L-isoaspartate alpha-methyl ester + S-adenosyl-L-homocysteine. Its function is as follows. Catalyzes the methyl esterification of L-isoaspartyl residues in peptides and proteins that result from spontaneous decomposition of normal L-aspartyl and L-asparaginyl residues. It plays a role in the repair and/or degradation of damaged proteins. This Nitrosospira multiformis (strain ATCC 25196 / NCIMB 11849 / C 71) protein is Protein-L-isoaspartate O-methyltransferase 2.